Reading from the N-terminus, the 485-residue chain is Argininosuccinate lyase (485 aa).

The protein belongs to the lyase 1 family. Argininosuccinate lyase subfamily.

The protein resides in the cytoplasm. The catalysed reaction is 2-(N(omega)-L-arginino)succinate = fumarate + L-arginine. Its pathway is amino-acid biosynthesis; L-arginine biosynthesis; L-arginine from L-ornithine and carbamoyl phosphate: step 3/3. This is Argininosuccinate lyase from Nitrosopumilus maritimus (strain SCM1).